We begin with the raw amino-acid sequence, 1007 residues long: Calmodulin-binding transcription activator 1 (1007 aa).

The segment at residues 18 to 144 is a DNA-binding region (CG-1); that stretch reads MEQLLSEAQH…YLEVKGNRTS (127 aa). A compositionally biased stretch (polar residues) spans 148 to 164; the sequence is KENNSNSVNGTASVNID. Residues 148–227 form a disordered region; sequence KENNSNSVNG…VHGNRVRESD (80 aa). The span at 165 to 176 shows a compositional bias: low complexity; the sequence is STASPTSTLSSL. A compositionally biased stretch (polar residues) spans 183-202; sequence GDSQQASSVLRPSPEPQTGN. Positions 233 to 398 are transcription activation; it reads DVRALDTVGN…TVECETAAAG (166 aa). 2 ANK repeats span residues 612-641 and 645-674; these read DGQG…NINF and NGWS…DAGA. IQ domains are found at residues 821-850 and 844-873; these read LSCA…RIVK and IRQR…SVGL. The calmodulin-binding stretch occupies residues 869-891; that stretch reads WSVGLLEKIILRWRRKGNGLRGF. Residues 915–943 adopt a coiled-coil conformation; that stretch reads QEDEYDYLKEGRKQTEERLQKALTRVKSM. Ser-942 is subject to Phosphoserine.

This sequence belongs to the CAMTA family. Expressed in roots, stems, leaves, pollen and siliques.

The protein localises to the nucleus. Functionally, transcription activator that binds calmodulin in a calcium-dependent manner in vitro. Binds to the DNA consensus sequence 5'-[ACG]CGCG[GTC]-3'. Regulates transcriptional activity in response to calcium signals. Involved in freezing tolerance. Involved in freezing tolerance in association with CAMTA2 and CAMTA3. Contributes together with CAMTA2 and CAMTA3 to the positive regulation of the cold-induced expression of DREB1A/CBF3, DREB1B/CBF1 and DREB1C/CBF2. Involved in drought stress responses by regulating several drought-responsive genes. Involved in auxin signaling and responses to abiotic stresses. Activates the expression of the V-PPase proton pump AVP1 in pollen. This chain is Calmodulin-binding transcription activator 1, found in Arabidopsis thaliana (Mouse-ear cress).